Reading from the N-terminus, the 677-residue chain is Nuclear fusion protein FUS2 (677 aa).

Residue T20 is modified to Phosphothreonine. A phosphoserine mark is found at S67, S72, and S84. Position 88 is a phosphothreonine (T88). S100 and S106 each carry phosphoserine. Residues 112 to 326 (KFYKIVQEFY…KYSLFSNKLE (215 aa)) form the DH domain.

It is found in the cell tip. In terms of biological role, promotes cell fusion during zygote formation. The protein is Nuclear fusion protein FUS2 (FUS2) of Saccharomyces cerevisiae (strain ATCC 204508 / S288c) (Baker's yeast).